The following is a 149-amino-acid chain: UPAR/Ly6 domain-containing protein bou (149 aa).

Residues 1 to 31 form the signal peptide; that stretch reads MWPPKHAHIGWLSSLALVVLLMSLQMVMVSG. Over 32–126 the chain is Extracellular; sequence IECYVCDTSD…YTCDTDGCNA (95 aa). Cystine bridges form between cysteine 34–cysteine 74, cysteine 37–cysteine 48, cysteine 65–cysteine 91, cysteine 100–cysteine 115, and cysteine 119–cysteine 124. The N-linked (GlcNAc...) asparagine glycan is linked to asparagine 64. Asparagine 125 carries the GPI-anchor amidated asparagine lipid modification. Positions 126–149 are cleaved as a propeptide — removed in mature form; that stretch reads AAGRLELEWGVAAALLTLTWLLRH. Residues 127–147 traverse the membrane as a helical segment; the sequence is AGRLELEWGVAAALLTLTWLL. Topologically, residues 148 to 149 are cytoplasmic; the sequence is RH.

GPI-anchored.

Its subcellular location is the cell membrane. It localises to the cell junction. It is found in the septate junction. The protein localises to the cytoplasm. The protein resides in the cell cortex. Its subcellular location is the secreted. It localises to the apicolateral cell membrane. Involved in tracheal paracellular barrier functions mediated by epithelial cell septate junctions. Involved in paracellular barrier functions mediated by glial cell septate junctions in the peripheral nervous system, including the chordotonal organs, but not the hemolymph-brain barrier (the insect blood-brain barrier) of the central nervous system. Required for septate junction assembly, possibly by organizing the preassembly and transport of septate junction proteins such as dlg1/disks large 1, Nrx-IV/Neurexin-IV and the claudin protein kune. Involved in chitin fiber organization during tracheal development. Secreted, possibly in association with extracellular vesicles, to act non-autonomously on tissues distant from its site of expression. The protein is UPAR/Ly6 domain-containing protein bou of Drosophila melanogaster (Fruit fly).